Consider the following 263-residue polypeptide: Small ribosomal subunit protein uS2 (263 aa).

Ser-2 is subject to N-acetylserine. Positions 211 to 242 are enriched in acidic residues; it reads EQTAEEEAEAAEGAEFEVEEEEVEQEWQEPAE. Residues 211–263 are disordered; the sequence is EQTAEEEAEAAEGAEFEVEEEEVEQEWQEPAEADWNASAPPADWNDAANAEAF. Positions 246–263 are enriched in low complexity; the sequence is NASAPPADWNDAANAEAF.

It belongs to the universal ribosomal protein uS2 family. Component of the small ribosomal subunit. Mature ribosomes consist of a small (40S) and a large (60S) subunit. The 40S subunit contains about 33 different proteins and 1 molecule of RNA (18S). The 60S subunit contains about 49 different proteins and 3 molecules of RNA (25S, 5.8S and 5S). Interacts with RPS21.

It is found in the cytoplasm. Required for the assembly and/or stability of the 40S ribosomal subunit. Required for the processing of the 20S rRNA-precursor to mature 18S rRNA in a late step of the maturation of 40S ribosomal subunits. The polypeptide is Small ribosomal subunit protein uS2 (Komagataella phaffii (strain GS115 / ATCC 20864) (Yeast)).